The chain runs to 295 residues: Pyridoxal 5'-phosphate synthase subunit PdxS (295 aa).

A D-ribose 5-phosphate-binding site is contributed by D25. The active-site Schiff-base intermediate with D-ribose 5-phosphate is K82. G154 provides a ligand contact to D-ribose 5-phosphate. R166 contributes to the D-glyceraldehyde 3-phosphate binding site. D-ribose 5-phosphate is bound by residues G215 and 236-237 (GS).

The protein belongs to the PdxS/SNZ family. In terms of assembly, in the presence of PdxT, forms a dodecamer of heterodimers.

It catalyses the reaction aldehydo-D-ribose 5-phosphate + D-glyceraldehyde 3-phosphate + L-glutamine = pyridoxal 5'-phosphate + L-glutamate + phosphate + 3 H2O + H(+). Its pathway is cofactor biosynthesis; pyridoxal 5'-phosphate biosynthesis. In terms of biological role, catalyzes the formation of pyridoxal 5'-phosphate from ribose 5-phosphate (RBP), glyceraldehyde 3-phosphate (G3P) and ammonia. The ammonia is provided by the PdxT subunit. Can also use ribulose 5-phosphate and dihydroxyacetone phosphate as substrates, resulting from enzyme-catalyzed isomerization of RBP and G3P, respectively. The protein is Pyridoxal 5'-phosphate synthase subunit PdxS of Shouchella clausii (strain KSM-K16) (Alkalihalobacillus clausii).